Here is a 747-residue protein sequence, read N- to C-terminus: Ferric reduction oxidase 7, chloroplastic (747 aa).

Positions 1-23 (MDDHETPLLSKDLSSSSSSSSSS) are disordered. Residues 1–28 (MDDHETPLLSKDLSSSSSSSSSSSSVVV) constitute a chloroplast transit peptide. The segment covering 14–23 (SSSSSSSSSS) has biased composition (low complexity). 6 helical membrane-spanning segments follow: residues 37 to 56 (VVMS…YPGS), 81 to 99 (FLIF…SLYL), 132 to 155 (FGVV…WAIY), 222 to 245 (YHVW…VVGW), 297 to 321 (THQL…SIVA), and 344 to 364 (VISA…KPPN). The region spanning 187–308 (FGMIGLLCMV…QLYIVFVVFL (122 aa)) is the Ferric oxidoreductase domain. 4 residues coordinate heme: histidine 223, histidine 237, histidine 298, and histidine 311. In terms of domain architecture, FAD-binding FR-type spans 337–454 (QSRRTVDVIS…EGPYGHESPY (118 aa)). 386–389 (HPFS) provides a ligand contact to FAD. An NAD(+)-binding site is contributed by 446–449 (GPYG). 2 consecutive transmembrane segments (helical) span residues 574 to 596 (NIWS…TLVD) and 612 to 634 (GLLF…VVFW).

Belongs to the ferric reductase (FRE) family. FAD is required as a cofactor. In terms of tissue distribution, expressed in shoots, flowers and siliques. Detected in cotyledons, leaves and trichomes, but not in roots.

The protein localises to the plastid. Its subcellular location is the chloroplast membrane. The enzyme catalyses 2 a Fe(II)-siderophore + NAD(+) + H(+) = 2 a Fe(III)-siderophore + NADH. Its function is as follows. Ferric chelate reductase involved in iron mobilization from the cytosol into the chloroplast. May participate in the transport of electrons to a Fe(3+) ion via FAD and heme intermediates. Might be involved iron homeostasis in trichomes. This chain is Ferric reduction oxidase 7, chloroplastic (FRO7), found in Arabidopsis thaliana (Mouse-ear cress).